The following is a 93-amino-acid chain: Putative pterin-4-alpha-carbinolamine dehydratase (93 aa).

This sequence belongs to the pterin-4-alpha-carbinolamine dehydratase family.

It catalyses the reaction (4aS,6R)-4a-hydroxy-L-erythro-5,6,7,8-tetrahydrobiopterin = (6R)-L-erythro-6,7-dihydrobiopterin + H2O. This is Putative pterin-4-alpha-carbinolamine dehydratase from Trichormus variabilis (strain ATCC 29413 / PCC 7937) (Anabaena variabilis).